The primary structure comprises 191 residues: Lipid A 1-phosphatase (191 aa).

Transmembrane regions (helical) follow at residues 22–42 (LLAL…PKVP), 60–80 (FIPT…VGLF), 117–137 (GNFN…AFLM), 145–162 (YLWL…RIYL), and 164–184 (MHTI…VGLF).

Belongs to the lipid A LpxE 1-phosphatase family.

It is found in the cell inner membrane. The protein operates within bacterial outer membrane biogenesis; LPS lipid A biosynthesis. Its function is as follows. Removes the 1-phosphate group from tetra- and probably hexaacylated lipid A species. Absence of the 1-phosphate group renders the bacteria partially resistant to host-derived cationic antimicrobial peptides (CAMP), allowing it to camouflage itself from the host innate immune response, and plays a role in the long-term colonization of the host's stomach. The protein is Lipid A 1-phosphatase of Helicobacter pylori (strain J99 / ATCC 700824) (Campylobacter pylori J99).